Reading from the N-terminus, the 104-residue chain is Turripeptide OL55 (104 aa).

In terms of processing, contains 8 disulfide bonds. As to expression, expressed by the venom duct.

Its subcellular location is the secreted. Functionally, acts as a neurotoxin by inhibiting an ion channel. The polypeptide is Turripeptide OL55 (Iotyrris olangoensis (Sea snail)).